Consider the following 498-residue polypeptide: uncharacterized protein (498 aa).

Disordered regions lie at residues 1–48 (MSND…ARPK), 99–134 (NDLH…GNSK), and 190–209 (NSEN…TSSN). Residues 35 to 44 (ELSTPKQVNQ) are compositionally biased toward polar residues. Over residues 99 to 110 (NDLHPLDNDSTR) the composition is skewed to basic and acidic residues. A compositionally biased stretch (polar residues) spans 111–126 (TSKTLKNSSEVLTASK).

This is an uncharacterized protein from Schizosaccharomyces pombe (strain 972 / ATCC 24843) (Fission yeast).